We begin with the raw amino-acid sequence, 391 residues long: MFMFEKPHGMRDTLPMLYETKKKVRSSLTEVMALWGYQFMETPALEFYDTVGVQSAILDQQLFKLLDQEGQTLVLRPDMTAPIARVAASKLHKDDHPLRVGYAANVFRAQEREGGRPAEFEQVGVELIGDGSTSADAEVIALVIFSLKNAGLTSFKISIGHVGILDALFVEVLGNEERAHVLRRYLYEKNYVGYREHVKSLNLSSIDKSRLLELLELRGGIETCSRAASIVDSEKGKRAVLELETLWETLGDYGCTDDIKLDLGMVSHMSYYTGVLFEIYAENVGFPIGNGGRYDQLLGRFDSPAPATGFGIRTDRLLEALKPAEEQEKIDVVIFSTEQRKEAIRFAEEERRKGKKVVMQDLAGIGDIDQMTKSFQNVTYFIGARKEEKHG.

The protein belongs to the class-II aminoacyl-tRNA synthetase family. HisZ subfamily. As to quaternary structure, heteromultimer composed of HisG and HisZ subunits.

It localises to the cytoplasm. Its pathway is amino-acid biosynthesis; L-histidine biosynthesis; L-histidine from 5-phospho-alpha-D-ribose 1-diphosphate: step 1/9. Its function is as follows. Required for the first step of histidine biosynthesis. May allow the feedback regulation of ATP phosphoribosyltransferase activity by histidine. The protein is ATP phosphoribosyltransferase regulatory subunit of Bacillus licheniformis (strain ATCC 14580 / DSM 13 / JCM 2505 / CCUG 7422 / NBRC 12200 / NCIMB 9375 / NCTC 10341 / NRRL NRS-1264 / Gibson 46).